The chain runs to 130 residues: Small ribosomal subunit protein uS11 (130 aa).

It belongs to the universal ribosomal protein uS11 family. In terms of assembly, part of the 30S ribosomal subunit. Interacts with proteins S7 and S18. Binds to IF-3.

Its function is as follows. Located on the platform of the 30S subunit, it bridges several disparate RNA helices of the 16S rRNA. Forms part of the Shine-Dalgarno cleft in the 70S ribosome. This chain is Small ribosomal subunit protein uS11, found in Alkalilimnicola ehrlichii (strain ATCC BAA-1101 / DSM 17681 / MLHE-1).